Reading from the N-terminus, the 349-residue chain is tRNA uridine(34) hydroxylase (349 aa).

The Rhodanese domain maps to 146–240; the sequence is DDPDAVFIDM…YARRAREQGL (95 aa). The active-site Cysteine persulfide intermediate is C200. Positions 316–328 are enriched in basic and acidic residues; sequence EEQRRRRAGRENG. Positions 316–349 are disordered; it reads EEQRRRRAGRENGNKIFNKSRGRLNTKLGIPDPE.

It belongs to the TrhO family.

The catalysed reaction is uridine(34) in tRNA + AH2 + O2 = 5-hydroxyuridine(34) in tRNA + A + H2O. Catalyzes oxygen-dependent 5-hydroxyuridine (ho5U) modification at position 34 in tRNAs. The sequence is that of tRNA uridine(34) hydroxylase from Enterobacter sp. (strain 638).